The chain runs to 382 residues: Lipid-A-disaccharide synthase (382 aa).

It belongs to the LpxB family.

It catalyses the reaction 2-N,3-O-bis[(3R)-3-hydroxytetradecanoyl]-alpha-D-glucosaminyl 1-phosphate + UDP-2-N,3-O-bis[(3R)-3-hydroxytetradecanoyl]-alpha-D-glucosamine = lipid A disaccharide (E. coli) + UDP + H(+). The enzyme catalyses a lipid X + a UDP-2-N,3-O-bis[(3R)-3-hydroxyacyl]-alpha-D-glucosamine = a lipid A disaccharide + UDP + H(+). It functions in the pathway glycolipid biosynthesis; lipid IV(A) biosynthesis; lipid IV(A) from (3R)-3-hydroxytetradecanoyl-[acyl-carrier-protein] and UDP-N-acetyl-alpha-D-glucosamine: step 5/6. Functionally, condensation of UDP-2,3-diacylglucosamine and 2,3-diacylglucosamine-1-phosphate to form lipid A disaccharide, a precursor of lipid A, a phosphorylated glycolipid that anchors the lipopolysaccharide to the outer membrane of the cell. This is Lipid-A-disaccharide synthase from Salmonella paratyphi A (strain AKU_12601).